Consider the following 371-residue polypeptide: Meiotic drive suppressor wtf18 (371 aa).

The next 8 membrane-spanning stretches (helical) occupy residues 86–106, 120–140, 153–173, 197–217, 233–253, 257–277, 287–307, and 321–341; these read FLLR…TAWV, AFSV…FCFF, VTVI…AQCV, DLVV…FGCV, CSIS…IWTL, LFGL…TKGL, ATGY…LFFY, and FIGN…GGIG.

Belongs to the WTF family. Homomer. Interacts with other proteins that exhibit high sequence similarity.

It localises to the spore membrane. It is found in the vacuole membrane. Its function is as follows. Acts as a suppressor component of the dual wtf meiotic drive system, and can suppress but not confer meiotic drive by compatible poisons. Wtf meiotic drive systems promote unequal transmission of alleles from the parental zygote to progeny spores by encoding a poison and an antidote from the same locus; the poison is trans-acting and forms toxic aggregates in all spores within an ascus, wherease the antidote is spore-specific and targets aggregates for degradation by the vacuole. Meiotic drive by wtf systems therefore lead to poisoning of all progeny that do not inherit the dual poison/antidote allele, or express a compatible antidote. The protein is Meiotic drive suppressor wtf18 of Schizosaccharomyces kambucha (Fission yeast).